The following is a 341-amino-acid chain: Eukaryotic translation initiation factor 2 subunit 1 (341 aa).

Residues 18 to 89 (NELVMVRIES…DKGYIDLSKR (72 aa)) form the S1 motif domain. Residues 301-341 (LMEQLEVENQDGDGEEHEDDDDDDDDEEEEEKPKEKKSSRK) are disordered. The span at 303–330 (EQLEVENQDGDGEEHEDDDDDDDDEEEE) shows a compositional bias: acidic residues. Residues 331 to 341 (EKPKEKKSSRK) show a composition bias toward basic and acidic residues.

This sequence belongs to the eIF-2-alpha family. Eukaryotic translation initiation factor 2 eIF2 is a heterotrimeric complex composed of an alpha, a beta and a gamma subunit.

It is found in the cytoplasm. Its subcellular location is the cytosol. EIF-2 functions in the early steps of protein synthesis by forming a ternary complex with GTP and initiator tRNA. This complex binds to a 40S ribosomal subunit, followed by mRNA binding to form a 43S pre-initiation complex. Junction of the 60S ribosomal subunit to form the 80S initiation complex is preceded by hydrolysis of the GTP bound to eIF-2 and release of an eIF-2-GDP binary complex. In order for eIF-2 to recycle and catalyze another round of initiation, the GDP bound to eIF-2 must exchange with GTP by way of a reaction catalyzed by eIF2B. This is Eukaryotic translation initiation factor 2 subunit 1 (eif2s1) from Dictyostelium discoideum (Social amoeba).